A 200-amino-acid chain; its full sequence is Ribonuclease HII (200 aa).

Residues 9 to 198 (ALIAGVDEVG…VQRVLAQAKG (190 aa)) form the RNase H type-2 domain. The a divalent metal cation site is built by D15, E16, and D107.

It belongs to the RNase HII family. Mn(2+) is required as a cofactor. The cofactor is Mg(2+).

The protein resides in the cytoplasm. The catalysed reaction is Endonucleolytic cleavage to 5'-phosphomonoester.. Functionally, endonuclease that specifically degrades the RNA of RNA-DNA hybrids. The protein is Ribonuclease HII of Pseudoalteromonas translucida (strain TAC 125).